The primary structure comprises 382 residues: Pyrimidine monooxygenase RutA (382 aa).

FMN contacts are provided by residues 68 to 69 (IK), asparagine 134, glutamate 143, 159 to 160 (RY), and serine 209.

Belongs to the NtaA/SnaA/DszA monooxygenase family. RutA subfamily.

The enzyme catalyses uracil + FMNH2 + NADH + O2 = (Z)-3-ureidoacrylate + FMN + NAD(+) + H2O + H(+). It catalyses the reaction thymine + FMNH2 + NADH + O2 = (Z)-2-methylureidoacrylate + FMN + NAD(+) + H2O + H(+). In terms of biological role, catalyzes the pyrimidine ring opening between N-3 and C-4 by an unusual flavin hydroperoxide-catalyzed mechanism, adding oxygen atoms in the process to yield ureidoacrylate peracid, that immediately reacts with FMN forming ureidoacrylate and FMN-N(5)-oxide. The FMN-N(5)-oxide reacts spontaneously with NADH to produce FMN. Requires the flavin reductase RutF to regenerate FMN in vivo. The chain is Pyrimidine monooxygenase RutA from Escherichia coli (strain SE11).